The chain runs to 562 residues: Ikaros family zinc finger protein (562 aa).

3 C2H2-type zinc fingers span residues 45–67 (IKCEECGLICAGQSHYNVHIRSH), 73–95 (FKCHICGVAFTQKGNLRRHYKIH), and 101–123 (FQCPICSYRCRRRDALNGHMRIH). Residues 129–152 (YRCSYCARSYKSRQSMKEHEYQCP) form a C2H2-type 4; degenerate zinc finger. 4 disordered regions span residues 178 to 210 (NPLALPGPRPSTSQPAPVLSQLGQLGARPPPYP), 293 to 342 (QNQQ…VKPT), 361 to 404 (QLED…KEDD), and 451 to 473 (DESKNEISSVDSRSPLDQSSTQD). A compositionally biased stretch (low complexity) spans 307-326 (PSLSEATPSSHSSHSSAEDS). A compositionally biased stretch (polar residues) spans 327–336 (GQVNKFSPTE). Over residues 369-383 (DSRKRPHSFESEPTP) the composition is skewed to basic and acidic residues. A compositionally biased stretch (polar residues) spans 456 to 471 (EISSVDSRSPLDQSST). 2 consecutive C2H2-type zinc fingers follow at residues 494-516 (WECKTCNCIFLNEITYRIHMGVH) and 522-546 (LVCNSCGKRCSDQQEFQAHLVHHQH).

The protein belongs to the Ikaros C2H2-type zinc-finger protein family. As to expression, expression is strongest in the anterior Fol cells of the oikoplastic epithelium.

The protein localises to the nucleus. In Oikopleura dioica (Tunicate), this protein is Ikaros family zinc finger protein.